Reading from the N-terminus, the 1172-residue chain is Structural maintenance of chromosomes protein 2 (1172 aa).

32-39 (GLNGSGKS) serves as a coordination point for ATP. Coiled-coil stretches lie at residues 172 to 204 (RMFEERKEKAFRTMQRKEAKVEEINTLLREEIE) and 258 to 507 (SHIA…AYME). The 121-residue stretch at 520–640 (SKVKGLVAQL…CDTPESAKKV (121 aa)) folds into the SMC hinge domain. A coiled-coil region spans residues 676–941 (LLQIQKLNSL…INHLEKENDW (266 aa)).

Belongs to the SMC family. SMC2 subfamily. Forms a heterodimer with cut3/smc4. Component of the condensin complex, which contains the cut3 and cut14 heterodimer, and three non smc subunits that probably regulate the complex: cnd1, cnd2 and cnd3.

Its subcellular location is the nucleus. It localises to the cytoplasm. The protein resides in the chromosome. Its function is as follows. Central component of the condensin complex, a complex required for conversion of interphase chromatin into mitotic-like condense chromosomes. The condensin complex probably introduces positive supercoils into relaxed DNA in the presence of type I topoisomerases and converts nicked DNA into positive knotted forms in the presence of type II topoisomerases. This chain is Structural maintenance of chromosomes protein 2 (cut14), found in Schizosaccharomyces pombe (strain 972 / ATCC 24843) (Fission yeast).